Consider the following 766-residue polypeptide: Phosphoribosylformylglycinamidine synthase subunit PurL (766 aa).

The active site involves His49. ATP-binding residues include Tyr52 and Lys91. Residue Glu93 participates in Mg(2+) binding. Residues 94–97 (SHNH) and Arg116 contribute to the substrate site. Catalysis depends on His95, which acts as the Proton acceptor. Residue Asp117 participates in Mg(2+) binding. Gln240 is a binding site for substrate. A Mg(2+)-binding site is contributed by Asp268. 312–314 (ESQ) is a binding site for substrate. Asp508 and Gly545 together coordinate ATP. Asn546 serves as a coordination point for Mg(2+). Residue Ser548 coordinates substrate.

The protein belongs to the FGAMS family. Monomer. Part of the FGAM synthase complex composed of 1 PurL, 1 PurQ and 2 PurS subunits.

Its subcellular location is the cytoplasm. The enzyme catalyses N(2)-formyl-N(1)-(5-phospho-beta-D-ribosyl)glycinamide + L-glutamine + ATP + H2O = 2-formamido-N(1)-(5-O-phospho-beta-D-ribosyl)acetamidine + L-glutamate + ADP + phosphate + H(+). Its pathway is purine metabolism; IMP biosynthesis via de novo pathway; 5-amino-1-(5-phospho-D-ribosyl)imidazole from N(2)-formyl-N(1)-(5-phospho-D-ribosyl)glycinamide: step 1/2. Part of the phosphoribosylformylglycinamidine synthase complex involved in the purines biosynthetic pathway. Catalyzes the ATP-dependent conversion of formylglycinamide ribonucleotide (FGAR) and glutamine to yield formylglycinamidine ribonucleotide (FGAM) and glutamate. The FGAM synthase complex is composed of three subunits. PurQ produces an ammonia molecule by converting glutamine to glutamate. PurL transfers the ammonia molecule to FGAR to form FGAM in an ATP-dependent manner. PurS interacts with PurQ and PurL and is thought to assist in the transfer of the ammonia molecule from PurQ to PurL. This chain is Phosphoribosylformylglycinamidine synthase subunit PurL, found in Synechococcus sp. (strain CC9902).